The sequence spans 701 residues: Larval serum protein 2 (701 aa).

Residues 1 to 21 (MKSFTVIALAAVALLATLGQA) form the signal peptide. Residue Asn204 is glycosylated (N-linked (GlcNAc...) asparagine).

It belongs to the hemocyanin family. In terms of assembly, homohexamer.

It localises to the secreted. Its subcellular location is the extracellular space. Functionally, larval storage protein (LSP) which may serve as a store of amino acids for synthesis of adult proteins. This Drosophila melanogaster (Fruit fly) protein is Larval serum protein 2 (Lsp2).